Here is a 406-residue protein sequence, read N- to C-terminus: S-adenosylmethionine synthase (406 aa).

Position 141–146 (141–146) interacts with ATP; sequence GQGSMD.

Belongs to the AdoMet synthase 2 family. As to quaternary structure, homodimer. Mg(2+) is required as a cofactor.

It carries out the reaction L-methionine + ATP + H2O = S-adenosyl-L-methionine + phosphate + diphosphate. Its pathway is amino-acid biosynthesis; S-adenosyl-L-methionine biosynthesis; S-adenosyl-L-methionine from L-methionine: step 1/1. In terms of biological role, catalyzes the formation of S-adenosylmethionine from methionine and ATP. The protein is S-adenosylmethionine synthase (mat) of Methanocaldococcus jannaschii (strain ATCC 43067 / DSM 2661 / JAL-1 / JCM 10045 / NBRC 100440) (Methanococcus jannaschii).